A 427-amino-acid polypeptide reads, in one-letter code: tRNA(Ile)-lysidine synthase (427 aa).

21–26 is an ATP binding site; the sequence is SGGADS.

It belongs to the tRNA(Ile)-lysidine synthase family.

The protein localises to the cytoplasm. The catalysed reaction is cytidine(34) in tRNA(Ile2) + L-lysine + ATP = lysidine(34) in tRNA(Ile2) + AMP + diphosphate + H(+). In terms of biological role, ligates lysine onto the cytidine present at position 34 of the AUA codon-specific tRNA(Ile) that contains the anticodon CAU, in an ATP-dependent manner. Cytidine is converted to lysidine, thus changing the amino acid specificity of the tRNA from methionine to isoleucine. In Actinobacillus succinogenes (strain ATCC 55618 / DSM 22257 / CCUG 43843 / 130Z), this protein is tRNA(Ile)-lysidine synthase.